A 466-amino-acid polypeptide reads, in one-letter code: Histidine--tRNA ligase (466 aa).

The protein belongs to the class-II aminoacyl-tRNA synthetase family. In terms of assembly, homodimer.

The protein localises to the cytoplasm. It catalyses the reaction tRNA(His) + L-histidine + ATP = L-histidyl-tRNA(His) + AMP + diphosphate + H(+). The polypeptide is Histidine--tRNA ligase (Bifidobacterium longum subsp. infantis (strain ATCC 15697 / DSM 20088 / JCM 1222 / NCTC 11817 / S12)).